The following is a 386-amino-acid chain: Methionine aminopeptidase 1 (386 aa).

A2 bears the N-acetylalanine mark. Residues 6–59 (TRVCETDGCSSEAKLQCPTCIKLGIQGSYFCSQECFKGSWATHKLLHKKAKDEK) form a C6H2-type zinc finger. Residues C9, C14, C22, C25, C36, C40, H48, and H52 each contribute to the Zn(2+) site. H203 contributes to the a protein binding site. Zn(2+) contacts are provided by D220, D231, and H294. H301 is a binding site for a protein. Residues E327 and E358 each coordinate Zn(2+).

The protein belongs to the peptidase M24A family. Methionine aminopeptidase type 1 subfamily. As to quaternary structure, associates with the 60S ribosomal subunit of the 80S translational complex. Requires Zn(2+) as cofactor. Co(2+) is required as a cofactor. Mn(2+) serves as cofactor. The cofactor is Fe(2+).

It is found in the cytoplasm. It carries out the reaction Release of N-terminal amino acids, preferentially methionine, from peptides and arylamides.. Cotranslationally removes the N-terminal methionine from nascent proteins. The N-terminal methionine is often cleaved when the second residue in the primary sequence is small and uncharged (Met-Ala-, Cys, Gly, Pro, Ser, Thr, or Val). Required for normal progression through the cell cycle. The sequence is that of Methionine aminopeptidase 1 (METAP1) from Homo sapiens (Human).